The chain runs to 512 residues: UDP-N-acetylglucosamine--peptide N-acetylglucosaminyltransferase GtfA subunit (512 aa).

Glycine 16–tyrosine 19 contacts UDP. Histidine 251 provides a ligand contact to N-acetyl-D-glucosamine. UDP-binding positions include glutamine 393 to histidine 394 and glutamate 413 to glycine 416.

Belongs to the glycosyltransferase group 1 family. Glycosyltransferase 4 subfamily. In terms of assembly, forms a heterotetramer with 2 subunits each of GtfA and GtfB. Part of the accessory SecA2/SecY2 protein translocation apparatus.

It is found in the cytoplasm. Its subcellular location is the cell membrane. It carries out the reaction L-seryl-[protein] + UDP-N-acetyl-alpha-D-glucosamine = 3-O-[N-acetyl-alpha-D-glucosaminyl]-L-seryl-[protein] + UDP + H(+). The protein operates within protein modification; protein glycosylation. Required for polymorphic O-glycosylation of the serine-rich repeat protein (SRRP) in this bacteria. Catalyzes the first step in glycosylation by transferring N-acetylglucosamine from UDP-GlcNAc to serine residues in the substrate protein. Part of the accessory SecA2/SecY2 system specifically required to export serine-rich repeat cell wall proteins encoded in the same operon. The GtfA-GtfB complex adds GlcNAc from UDP-GlcNAc to SRRP (experimentally characterized with a truncated SSR1 construct); the alpha linkage was shown for this enzyme but not the residues glycosylated on SRRP. In Limosilactobacillus reuteri subsp. suis (strain ATCC 53608 / LMG 31752 / 1063) (Lactobacillus reuteri), this protein is UDP-N-acetylglucosamine--peptide N-acetylglucosaminyltransferase GtfA subunit.